Consider the following 394-residue polypeptide: Probable dual specificity protein phosphatase DDB_G0281963 (394 aa).

The Tyrosine-protein phosphatase domain maps to 2-142 (NDVSRIFPGF…LKKYELILKK (141 aa)). The active-site Phosphocysteine intermediate is C86. Residues 147–191 (PQIVEKESEEEDDDEDDDDDDYDSDEDDDDDSEDDDFEEEFDNVV) are disordered. Over residues 153 to 188 (ESEEEDDDEDDDDDDYDSDEDDDDDSEDDDFEEEFD) the composition is skewed to acidic residues.

This sequence belongs to the protein-tyrosine phosphatase family. Non-receptor class dual specificity subfamily.

The enzyme catalyses O-phospho-L-tyrosyl-[protein] + H2O = L-tyrosyl-[protein] + phosphate. The catalysed reaction is O-phospho-L-seryl-[protein] + H2O = L-seryl-[protein] + phosphate. It catalyses the reaction O-phospho-L-threonyl-[protein] + H2O = L-threonyl-[protein] + phosphate. Its function is as follows. Has a dual specificity toward Ser/Thr and Tyr-containing proteins. The chain is Probable dual specificity protein phosphatase DDB_G0281963 from Dictyostelium discoideum (Social amoeba).